Here is a 1998-residue protein sequence, read N- to C-terminus: Receptor-type tyrosine-protein phosphatase beta (1998 aa).

The first 22 residues, Met1 to Ala22, serve as a signal peptide directing secretion. 17 consecutive Fibronectin type-III domains span residues Glu23–Thr109, Pro113–Pro206, Val207–Met291, Glu292–Leu384, Pro378–Thr466, Ala470–Ala556, Gln557–Thr642, Val643–Asp733, Lys734–Glu821, Pro822–Asn913, Pro908–Thr994, Val995–Ala1088, Pro1086–Val1173, Ala1176–Ser1263, Pro1264–Asp1357, Lys1358–Pro1449, and Pro1449–Ala1551. The Extracellular segment spans residues Glu23–Glu1622. N-linked (GlcNAc...) asparagine glycans are attached at residues Asn28, Asn53, Asn75, Asn173, Asn199, and Asn268. N-linked (GlcNAc...) asparagine glycosylation is found at Asn415, Asn422, Asn480, Asn575, Asn599, and Asn653. Asn830 carries N-linked (GlcNAc...) asparagine glycosylation. Asn1041, Asn1097, Asn1164, Asn1186, Asn1213, Asn1275, Asn1368, Asn1471, Asn1475, and Asn1519 each carry an N-linked (GlcNAc...) asparagine glycan. The chain crosses the membrane as a helical span at residues Gly1623–Cys1643. The Cytoplasmic portion of the chain corresponds to Arg1644–Arg1997. One can recognise a Tyrosine-protein phosphatase domain in the interval Leu1704 to Val1964. Substrate-binding positions include Asp1871, Cys1905–Arg1911, and Gln1949. The active-site Phosphocysteine intermediate is Cys1905. Tyr1982 bears the Phosphotyrosine mark.

This sequence belongs to the protein-tyrosine phosphatase family. Receptor class 3 subfamily. In terms of assembly, monomer. Interacts with TEK. Interacts via fibronectin type-III 17 domain with CDH5. Detected in a complex with CNTN1 and NRCAM. Interacts (phosphorylated form) with FYN and GRB2. Interacts with IGFBP2. Expression is very high in the vasculature of lung, spleen, and kidney, as well as in the heart valves, and is also present in the endothelium of arterioles and venules. Also expressed in tumor vasculature.

Its subcellular location is the membrane. The catalysed reaction is O-phospho-L-tyrosyl-[protein] + H2O = L-tyrosyl-[protein] + phosphate. Its function is as follows. Plays an important role in blood vessel remodeling and angiogenesis. Not necessary for the initial formation of blood vessels, but is essential for their maintenance and remodeling. Can induce dephosphorylation of TEK/TIE2, CDH5/VE-cadherin and KDR/VEGFR-2. Regulates angiopoietin-TIE2 signaling in endothelial cells. Acts as a negative regulator of TIE2, and controls TIE2 driven endothelial cell proliferation, which in turn affects blood vessel remodeling during embryonic development and determines blood vessel size during perinatal growth. Essential for the maintenance of endothelial cell contact integrity and for the adhesive function of VE-cadherin in endothelial cells and this requires the presence of plakoglobin. In Mus musculus (Mouse), this protein is Receptor-type tyrosine-protein phosphatase beta (Ptprb).